A 281-amino-acid polypeptide reads, in one-letter code: Pantothenate synthetase (281 aa).

30–37 (MGNLHQGH) serves as a coordination point for ATP. Histidine 37 acts as the Proton donor in catalysis. A (R)-pantoate-binding site is contributed by glutamine 61. Glutamine 61 is a binding site for beta-alanine. Residue 149–152 (GNKD) participates in ATP binding. Glutamine 155 serves as a coordination point for (R)-pantoate. Residues isoleucine 178 and 186 to 189 (MSSR) contribute to the ATP site.

Belongs to the pantothenate synthetase family. As to quaternary structure, homodimer.

The protein resides in the cytoplasm. It catalyses the reaction (R)-pantoate + beta-alanine + ATP = (R)-pantothenate + AMP + diphosphate + H(+). The protein operates within cofactor biosynthesis; (R)-pantothenate biosynthesis; (R)-pantothenate from (R)-pantoate and beta-alanine: step 1/1. In terms of biological role, catalyzes the condensation of pantoate with beta-alanine in an ATP-dependent reaction via a pantoyl-adenylate intermediate. This Shewanella baltica (strain OS155 / ATCC BAA-1091) protein is Pantothenate synthetase.